The sequence spans 259 residues: Diaminopimelate epimerase (259 aa).

Substrate is bound by residues Asn14, Gln42, and Asn60. Cys69 serves as the catalytic Proton donor. Substrate is bound by residues 70–71 (GN), Asn151, Asn184, and 202–203 (ER). Cys211 (proton acceptor) is an active-site residue. A substrate-binding site is contributed by 212-213 (GS).

It belongs to the diaminopimelate epimerase family. In terms of assembly, homodimer.

The protein localises to the cytoplasm. It carries out the reaction (2S,6S)-2,6-diaminopimelate = meso-2,6-diaminopimelate. The protein operates within amino-acid biosynthesis; L-lysine biosynthesis via DAP pathway; DL-2,6-diaminopimelate from LL-2,6-diaminopimelate: step 1/1. Catalyzes the stereoinversion of LL-2,6-diaminopimelate (L,L-DAP) to meso-diaminopimelate (meso-DAP), a precursor of L-lysine and an essential component of the bacterial peptidoglycan. The polypeptide is Diaminopimelate epimerase (Wolbachia sp. subsp. Brugia malayi (strain TRS)).